Here is a 435-residue protein sequence, read N- to C-terminus: S-locus-specific glycoprotein BS29-2 (435 aa).

The signal sequence occupies residues 1–30 (MKGVGKPYENSHTSFLLVFFVLTLFSPAFS). The Bulb-type lectin domain occupies 33-155 (TLSSIESLKI…NKNDRSGFLW (123 aa)). N-linked (GlcNAc...) asparagine glycans are attached at residues Asn-113, Asn-120, Asn-244, Asn-260, and Asn-389. The PAN domain occupies 350–430 (CSGDGFTRMK…NGQDLYVRLA (81 aa)). 2 disulfides stabilise this stretch: Cys-380–Cys-405 and Cys-388–Cys-390.

In terms of tissue distribution, stigma.

In terms of biological role, involved in sporophytic self-incompatibility system (the inability of flowering plants to achieve self-fertilization). The polypeptide is S-locus-specific glycoprotein BS29-2 (SLSG) (Brassica oleracea var. alboglabra (Chinese kale)).